Consider the following 363-residue polypeptide: 3,4-dihydroxy-2-butanone 4-phosphate synthase (363 aa).

A DHBP synthase region spans residues 1–201; sequence MTLSTAQEII…VADLIEYRNK (201 aa). Residues 27-28, D32, 140-144, and E164 contribute to the D-ribulose 5-phosphate site; these read RE and RAGHT. A Mg(2+)-binding site is contributed by E28. H143 contributes to the Mg(2+) binding site. Residues 202-363 form a GTP cyclohydrolase II-like region; it reads YETMIERISE…GLEIVEYVCS (162 aa).

It in the N-terminal section; belongs to the DHBP synthase family. The protein in the C-terminal section; belongs to the GTP cyclohydrolase II family. Requires Mg(2+) as cofactor. Mn(2+) serves as cofactor.

The catalysed reaction is D-ribulose 5-phosphate = (2S)-2-hydroxy-3-oxobutyl phosphate + formate + H(+). It functions in the pathway cofactor biosynthesis; riboflavin biosynthesis; 2-hydroxy-3-oxobutyl phosphate from D-ribulose 5-phosphate: step 1/1. Catalyzes the conversion of D-ribulose 5-phosphate to formate and 3,4-dihydroxy-2-butanone 4-phosphate. The chain is 3,4-dihydroxy-2-butanone 4-phosphate synthase (ribB) from Photobacterium phosphoreum.